The chain runs to 538 residues: Protein PNS1 (538 aa).

The span at 1-54 (MGESDAYYNGGQQQQYNGGYQQQYQPQPPAASYQAPPQQPYQQQPYQQGPPQNG) shows a compositional bias: low complexity. The interval 1 to 67 (MGESDAYYNG…GNGYMPAQGY (67 aa)) is disordered. The Cytoplasmic segment spans residues 1 to 88 (MGESDAYYNG…FKIAKPKYND (88 aa)). Residues 89–109 (LWAGILLILVFAGFVVVSGLA) traverse the membrane as a helical segment. Residues 110-137 (LQGYSANKGNAGDGIYNNKNDFSPNTST) lie on the Extracellular side of the membrane. N-linked (GlcNAc...) asparagine glycosylation occurs at Asn-134. A helical membrane pass occupies residues 138 to 158 (VILFMFVLAVAFVLSYAYVWM). Topologically, residues 159 to 165 (ARLFPKQ) are cytoplasmic. The helical transmembrane segment at 166–186 (FIWVTGILNVCWAIGTAIFYL) threads the bilayer. The Extracellular portion of the chain corresponds to 187–191 (WRKYW). Residues 192-212 (SAGIVFLIFGLFMAFCFWTWI) form a helical membrane-spanning segment. The Cytoplasmic segment spans residues 213 to 239 (SRIPFSALMLKTTIDVSKKYGHVYLVS). Residues 240–260 (LIGGIIATAFSAWYAITLVGI) traverse the membrane as a helical segment. Residues 261 to 280 (YVKYQPAQDNPSCADGGCGK) are Extracellular-facing. A helical transmembrane segment spans residues 281 to 301 (GKVIGLIAFITFAMYWFSEWL). Over 302 to 335 (KNTIHTTIAGVYGSWYFNPHNFPKDATRASAKRA) the chain is Cytoplasmic. A helical membrane pass occupies residues 336-356 (LTYSFGSIALGSLLVAIIQFL). Residues 357-372 (RQICNAARNQEGADGS) are Extracellular-facing. A helical membrane pass occupies residues 373–393 (FVGYAIFCCISCLLGLLEWAV). At 394-434 (EFINRYAFCHIALYGKAYFAAAKDTWKMIKDRGIDALINDC) the chain is on the cytoplasmic side. A helical membrane pass occupies residues 435–455 (LIGPVLSFGALFIAYACALLA). The Extracellular portion of the chain corresponds to 456–474 (YLYLYFTDPAYNSDGQYTA). Residues 475 to 495 (VVMAFSFLIGFQIANVFTTPI) form a helical membrane-spanning segment. The Cytoplasmic portion of the chain corresponds to 496–538 (SSGIETIFVAAGWDPQVMWRDHPELYNEMVRVYPKVQQVIKDR).

This sequence belongs to the CTL (choline transporter-like) family.

Its subcellular location is the cell membrane. Functionally, probably involved in transport through the plasma membrane. This chain is Protein PNS1 (PNS1), found in Gibberella zeae (strain ATCC MYA-4620 / CBS 123657 / FGSC 9075 / NRRL 31084 / PH-1) (Wheat head blight fungus).